Consider the following 88-residue polypeptide: Small ribosomal subunit protein bS20 (88 aa).

Belongs to the bacterial ribosomal protein bS20 family.

Its function is as follows. Binds directly to 16S ribosomal RNA. The sequence is that of Small ribosomal subunit protein bS20 from Maricaulis maris (strain MCS10) (Caulobacter maris).